Here is a 526-residue protein sequence, read N- to C-terminus: Opine oxidase subunit A (526 aa).

Cysteine 396, cysteine 398, cysteine 431, and cysteine 436 together coordinate [2Fe-2S] cluster.

The protein to T-protein and to dimethylglycine dehydrogenase. In terms of assembly, heterodimer of a subunit A and a subunit B. [2Fe-2S] cluster serves as cofactor.

It participates in opine metabolism; octopine degradation. In terms of biological role, oxidative cleavage of octopine into L-arginine and pyruvate. The protein is Opine oxidase subunit A (ooxA) of Rhizobium meliloti (Ensifer meliloti).